The chain runs to 227 residues: MNSSGDNAGFEWWRRTMQYKTGIGLTPEEKTRYEDDSKARELKKECLKCYEYRDWMLKYSPTVRFMVQAITKLNKGSDSKFDDSKIICDYCPDWKSGGFHPELGILLCQNRLRDKWHLEDTLSHELIHYFDDLKWQIDWLNLKHHACSEIRASSLSGECRFWEEFKRRGFRTGFHVARGHQDCVRRRAIISVSGNPNCQSKEHAAKIVDEVWDSCFADTRPFDEIYR.

Residue H124 participates in a divalent metal cation binding. E125 is a catalytic residue. H128 serves as a coordination point for a divalent metal cation.

The protein belongs to the peptidase M76 family. Interacts with ATP6.

The protein resides in the mitochondrion inner membrane. Functionally, has a dual role in the assembly of mitochondrial ATPase. Acts as a protease that removes the N-terminal 10 residues of mitochondrial ATPase CF(0) subunit 6 (ATP6) at the intermembrane space side. Also involved in the correct assembly of the membrane-embedded ATPase CF(0) particle, probably mediating association of ATP6 with the subunit 9 ring. This chain is Mitochondrial inner membrane protease ATP23 (ATP23), found in Saccharomyces cerevisiae (strain Lalvin EC1118 / Prise de mousse) (Baker's yeast).